The sequence spans 169 residues: X polypeptide (169 aa).

The protein belongs to the IagB/IpgF/P19 family.

The chain is X polypeptide (yubQ) from Escherichia coli (strain K12).